The following is a 394-amino-acid chain: Cobalt-precorrin-5B C(1)-methyltransferase (394 aa).

This sequence belongs to the CbiD family.

The catalysed reaction is Co-precorrin-5B + S-adenosyl-L-methionine = Co-precorrin-6A + S-adenosyl-L-homocysteine. It functions in the pathway cofactor biosynthesis; adenosylcobalamin biosynthesis; cob(II)yrinate a,c-diamide from sirohydrochlorin (anaerobic route): step 6/10. Functionally, catalyzes the methylation of C-1 in cobalt-precorrin-5B to form cobalt-precorrin-6A. In Clostridium beijerinckii (strain ATCC 51743 / NCIMB 8052) (Clostridium acetobutylicum), this protein is Cobalt-precorrin-5B C(1)-methyltransferase.